The sequence spans 343 residues: MMPPRLPGGHGGAMRSRSSSSGHHLNTTFHKRRRRRQQHHIGGSHISISHGSYLALLLLSTTCSLVATSASSSSSAANTDIAPPDPPPVSQVSIASSSPCAPQHWWDSQRDRCTPCTRCQGEMIPLRPCQLHTDTICGSIYDLKIDWVVLAKTEPNWKERRKSSEYEHFEHNAPLQHLTHEQLQQLHEEAAAAWVLDWQTGVLYVAVLTCLVFFSVAACILIHHMRQWRRMERRLDQDVEELSTKLMAKLAEVQSLDGGTFFIGNADALRGLPASAATTHPATTQSGIFQPQHVLLPEKRGKHQERRILKTLQPGNVYIEESNAGLGGMGVGLGVRGCSGLKG.

Disordered stretches follow at residues 1–44 and 74–96; these read MMPP…IGGS and SSAANTDIAPPDPPPVSQVSIAS. A signal peptide spans 1 to 76; that stretch reads MMPPRLPGGH…ATSASSSSSA (76 aa). Residues 13-24 are compositionally biased toward low complexity; that stretch reads AMRSRSSSSGHH. The segment covering 29 to 39 has biased composition (basic residues); sequence FHKRRRRRQQH. Residues 77-201 are Extracellular-facing; that stretch reads ANTDIAPPDP…AAWVLDWQTG (125 aa). The TNFR-Cys repeat unit spans residues 99-137; that stretch reads PCAPQHWWDSQRDRCTPCTRCQGEMIPLRPCQLHTDTIC. 3 disulfides stabilise this stretch: cysteine 100/cysteine 113, cysteine 116/cysteine 129, and cysteine 119/cysteine 137. The helical transmembrane segment at 202 to 222 threads the bilayer; that stretch reads VLYVAVLTCLVFFSVAACILI. At 223-343 the chain is on the cytoplasmic side; it reads HHMRQWRRME…GVRGCSGLKG (121 aa). Residues 225-257 are a coiled coil; that stretch reads MRQWRRMERRLDQDVEELSTKLMAKLAEVQSLD.

As to quaternary structure, monomer. Interacts (via extracellular cystein-rich domain) with egr (via secreted TNF-homology soluble form); forms heterohexamers when 3 copies associate with egr trimers. Interacts with Traf6. Interacts with Moe. As to expression, expressed in the adult midgut; under normal conditions expressed at higher levels than the other TNF receptor grnd.

It is found in the cell membrane. Its subcellular location is the cytoplasmic vesicle membrane. In terms of biological role, receptor for egr. Involved in induction of apoptosis by triggering JNK signaling. Mediates the tumor suppressor activity of egr which eliminates oncogenic cells from epithelia, thereby maintaining epithelial integrity. Following UV-induced epidermal damage, binds to egr released from apoptotic epidermal cells and plays a role in development of thermal allodynia, a responsiveness to subthreshold thermal stimuli which are not normally perceived as noxious. Together with Moe, involved in control of axon targeting of R8 and R2-R5 photoreceptors, independent of egr. This chain is Tumor necrosis factor receptor superfamily member wgn, found in Drosophila melanogaster (Fruit fly).